The primary structure comprises 314 residues: Methionyl-tRNA formyltransferase (314 aa).

113-116 (SLLP) lines the (6S)-5,6,7,8-tetrahydrofolate pocket.

Belongs to the Fmt family.

It carries out the reaction L-methionyl-tRNA(fMet) + (6R)-10-formyltetrahydrofolate = N-formyl-L-methionyl-tRNA(fMet) + (6S)-5,6,7,8-tetrahydrofolate + H(+). Its function is as follows. Attaches a formyl group to the free amino group of methionyl-tRNA(fMet). The formyl group appears to play a dual role in the initiator identity of N-formylmethionyl-tRNA by promoting its recognition by IF2 and preventing the misappropriation of this tRNA by the elongation apparatus. The protein is Methionyl-tRNA formyltransferase of Stutzerimonas stutzeri (strain A1501) (Pseudomonas stutzeri).